Reading from the N-terminus, the 130-residue chain is Iron-sulfur cluster insertion protein ErpA (130 aa).

Cys-46, Cys-116, and Cys-118 together coordinate iron-sulfur cluster.

It belongs to the HesB/IscA family. As to quaternary structure, homodimer. It depends on iron-sulfur cluster as a cofactor.

In terms of biological role, required for insertion of 4Fe-4S clusters for at least IspG. This Legionella pneumophila (strain Paris) protein is Iron-sulfur cluster insertion protein ErpA.